The sequence spans 953 residues: Protein translocase subunit SecA (953 aa).

Residues Gln-84, 102-106, and Asp-491 each bind ATP; that span reads GEGKT. Residues 832 to 953 form a disordered region; sequence EPEPAPEQPS…RAEAKKNKRR (122 aa). The segment covering 841 to 865 has biased composition (low complexity); sequence SVPVSVSRSAEPTPDLQAAAEAAAA. A compositionally biased stretch (basic and acidic residues) spans 898-907; that stretch reads KGLDAPEKQR. The segment covering 908–934 has biased composition (polar residues); that stretch reads LNYSGPTEQGGVQTTSESAGEQGNGTS. The span at 940-953 shows a compositional bias: basic and acidic residues; it reads RAAARAEAKKNKRR.

This sequence belongs to the SecA family. Monomer and homodimer. Part of the essential Sec protein translocation apparatus which comprises SecA, SecYEG and auxiliary proteins SecDF. Other proteins may also be involved.

It localises to the cell membrane. The protein resides in the cytoplasm. The catalysed reaction is ATP + H2O + cellular proteinSide 1 = ADP + phosphate + cellular proteinSide 2.. Part of the Sec protein translocase complex. Interacts with the SecYEG preprotein conducting channel. Has a central role in coupling the hydrolysis of ATP to the transfer of proteins into and across the cell membrane, serving as an ATP-driven molecular motor driving the stepwise translocation of polypeptide chains across the membrane. This Saccharopolyspora erythraea (strain ATCC 11635 / DSM 40517 / JCM 4748 / NBRC 13426 / NCIMB 8594 / NRRL 2338) protein is Protein translocase subunit SecA.